A 98-amino-acid polypeptide reads, in one-letter code: Small ribosomal subunit protein uS17 (98 aa).

It belongs to the universal ribosomal protein uS17 family. As to quaternary structure, part of the 30S ribosomal subunit.

One of the primary rRNA binding proteins, it binds specifically to the 5'-end of 16S ribosomal RNA. This chain is Small ribosomal subunit protein uS17, found in Carboxydothermus hydrogenoformans (strain ATCC BAA-161 / DSM 6008 / Z-2901).